Here is a 117-residue protein sequence, read N- to C-terminus: MKLCAVIIASLLVCVAVASSSDNQKEFAQEKEMTREETQSLGEHEKDDEVTGSEERSCIEEWKTCENDCECCGMSTLCAASWVDGHQIKLCRNEGGKLKKVLHFIQKSVSKIKSCKK.

Positions 1 to 20 (MKLCAVIIASLLVCVAVASS) are cleaved as a signal peptide. The disordered stretch occupies residues 20 to 55 (SSDNQKEFAQEKEMTREETQSLGEHEKDDEVTGSEE). The propeptide occupies 21–56 (SDNQKEFAQEKEMTREETQSLGEHEKDDEVTGSEER). The segment covering 23–55 (NQKEFAQEKEMTREETQSLGEHEKDDEVTGSEE) has biased composition (basic and acidic residues). Cystine bridges form between C58–C72, C65–C78, C69–C115, and C71–C91.

The protein belongs to the neurotoxin 03 (Tx2) family. 02 subfamily. HNTX-XV sub-subfamily. As to expression, expressed by the venom gland.

Its subcellular location is the secreted. Its function is as follows. Putative ion channel inhibitor. The protein is Hainantoxin-XV of Cyriopagopus hainanus (Chinese bird spider).